A 659-amino-acid polypeptide reads, in one-letter code: Exoribonuclease 2 (659 aa).

The region spanning 189 to 531 is the RNB domain; that stretch reads RKDLTALHFV…NHRLIKACIA (343 aa). The S1 motif domain maps to 576 to 658; that stretch reads KPEFQAEVQD…ETRSLIGNLV (83 aa).

Belongs to the RNR ribonuclease family. RNase II subfamily.

It localises to the cytoplasm. It carries out the reaction Exonucleolytic cleavage in the 3'- to 5'-direction to yield nucleoside 5'-phosphates.. Its function is as follows. Involved in mRNA degradation. Hydrolyzes single-stranded polyribonucleotides processively in the 3' to 5' direction. This is Exoribonuclease 2 from Actinobacillus succinogenes (strain ATCC 55618 / DSM 22257 / CCUG 43843 / 130Z).